Consider the following 428-residue polypeptide: MSYYLNSENHLDSGPIYVRENGQLHMVNLALDDVRSSLQKPRPFRLFPKGFSVELCMNREDDTAQKEKTDHFIFTYTREGNLRYSAKSLFSLVLGFISDNVDHIDSLIGFPEQIAEKLFSAAEARQKFTEPGAGLRALQKFTEAYGSLVLCSLCLRNRYLVISEKLEEIKSFRELTCLDLSCCKLGDEHELLEHLTNEALSSVTQLRLKDNCLSDAGVRKMTAPVRVMKRGLENLSLLDLSCNPEITDAGIGYLFSFRKLNCLDISGTGLKDIKAVKHKLQTHIGLVHSKVPLKEFDHSNCKTEGWADQIVLQWERVTLEAMKPQETLESRTAAQHFYGKRARTEAPGKYPLTEAHMNSSEKLQFYKEKAADCHGPLLKHEALSSQESKKSKKRAFEEPEKEQGSSSQTSKQKYVCLAVEDWDLLNSY.

LRR repeat units lie at residues 149 to 170 (VLCS…EEIK), 174 to 195 (ELTC…LEHL), 202 to 222 (SVTQ…RKMT), 234 to 255 (NLSL…GYLF), and 259 to 280 (KLNC…KHKL). Residues 379-412 (KHEALSSQESKKSKKRAFEEPEKEQGSSSQTSKQ) form a disordered region. Over residues 394–403 (RAFEEPEKEQ) the composition is skewed to basic and acidic residues. Residues S406 and S407 each carry the phosphoserine modification.

This sequence belongs to the LRRC42 family.

The sequence is that of Leucine-rich repeat-containing protein 42 (LRRC42) from Bos taurus (Bovine).